Consider the following 170-residue polypeptide: Co-chaperone protein HscB homolog (170 aa).

The J domain occupies 5–79; the sequence is DHFSLFGLPA…RARYLCEQAG (75 aa).

This sequence belongs to the HscB family. Interacts with HscA and stimulates its ATPase activity.

Co-chaperone involved in the maturation of iron-sulfur cluster-containing proteins. Seems to help targeting proteins to be folded toward HscA. In Bordetella parapertussis (strain 12822 / ATCC BAA-587 / NCTC 13253), this protein is Co-chaperone protein HscB homolog.